We begin with the raw amino-acid sequence, 360 residues long: POU domain, class 5, transcription factor 1 (360 aa).

Disordered stretches follow at residues 1–51 (MAGH…GPGV) and 88–114 (GGLE…SPEP). Positions 4 to 12 (HLTSDFAFS) match the 9aaTAD motif. Ser111 carries the phosphoserine; by MAPK modification. Lys123 is covalently cross-linked (Glycyl lysine isopeptide (Lys-Gly) (interchain with G-Cter in SUMO)). Positions 138-212 (DIKALQKELE…LLQKWVEEAD (75 aa)) constitute a POU-specific domain. DNA contacts are provided by Arg157 and Gln164. DNA-binding stretches follow at residues 180–186 (SQTTICR) and 193–196 (SFKN). The homeobox DNA-binding region spans 230 to 289 (RKRKRTSIENRVRGNLENLFLQCPKPTLQQISHIAQQLGLEKDVVRVWFCNRRQKGKRSS). At Thr235 the chain carries Phosphothreonine. Ser236, Ser289, Ser290, and Ser355 each carry phosphoserine.

Belongs to the POU transcription factor family. Class-5 subfamily. In terms of assembly, interacts with PKM. Interacts with WWP2. Interacts with UBE2I and ZSCAN10. Interacts with PCGF1. Interacts with ESRRB; recruits ESRRB near the POU5F1-SOX2 element in the NANOG proximal promoter; the interaction is DNA independent. Interacts with ZNF322. Interacts with MAPK8 and MAPK9; the interaction allows MAPK8 and MAPK9 to phosphorylate POU5F1 on Ser-355. Interacts (when phosphorylated on Ser-355) with FBXW8. Interacts with FBXW4. Interacts with SOX2 and SOX15; binds synergistically with either SOX2 or SOX15 to DNA. Interacts with DDX56. Post-translationally, sumoylation enhances the protein stability, DNA binding and transactivation activity. Sumoylation is required for enhanced YES1 expression. In terms of processing, ubiquitinated; undergoes 'Lys-63'-linked polyubiquitination by WWP2 leading to proteasomal degradation. ERK1/2-mediated phosphorylation at Ser-111 promotes nuclear exclusion and proteasomal degradation. Phosphorylation at Thr-235 and Ser-236 decrease DNA-binding and alters ability to activate transcription.

It is found in the cytoplasm. Its subcellular location is the nucleus. Its function is as follows. Transcription factor that binds to the octamer motif (5'-ATTTGCAT-3'). Forms a trimeric complex with SOX2 or SOX15 on DNA and controls the expression of a number of genes involved in embryonic development such as YES1, FGF4, UTF1 and ZFP206. Critical for early embryogenesis and for embryonic stem cell pluripotency. This chain is POU domain, class 5, transcription factor 1 (POU5F1), found in Pan troglodytes (Chimpanzee).